We begin with the raw amino-acid sequence, 454 residues long: COBRA-like protein 6 (454 aa).

Residues 1-24 (MGAMLNLLLVVTVILCSILSPTRF) form the signal peptide. N-linked (GlcNAc...) asparagine glycosylation is found at asparagine 104, asparagine 191, asparagine 320, asparagine 355, and asparagine 391. Serine 429 carries GPI-anchor amidated serine lipidation. Positions 430–454 (SSSSAVISSVSVVFCFLLHHLLLLV) are cleaved as a propeptide — removed in mature form.

The protein belongs to the COBRA family. Expressed in flowers and siliques.

It localises to the cell membrane. This Arabidopsis thaliana (Mouse-ear cress) protein is COBRA-like protein 6 (COBL6).